The primary structure comprises 191 residues: Adenine phosphoribosyltransferase (191 aa).

This sequence belongs to the purine/pyrimidine phosphoribosyltransferase family. In terms of assembly, homodimer.

Its subcellular location is the cytoplasm. It carries out the reaction AMP + diphosphate = 5-phospho-alpha-D-ribose 1-diphosphate + adenine. It participates in purine metabolism; AMP biosynthesis via salvage pathway; AMP from adenine: step 1/1. Its function is as follows. Catalyzes a salvage reaction resulting in the formation of AMP, that is energically less costly than de novo synthesis. This chain is Adenine phosphoribosyltransferase, found in Clavibacter sepedonicus (Clavibacter michiganensis subsp. sepedonicus).